Consider the following 110-residue polypeptide: UPF0060 membrane protein Ping_0587 (110 aa).

The next 4 helical transmembrane spans lie at 6-26 (IFGIFTVTAVAEIVGCYLPYL), 33-53 (SIWLLVPAAFSLAAFVWLLTL), 61-81 (TYAAYGGIYVSVALMWLWLVE), and 87-107 (MTDLLGVLICIIGMAVIMFGP).

The protein belongs to the UPF0060 family.

Its subcellular location is the cell inner membrane. In Psychromonas ingrahamii (strain DSM 17664 / CCUG 51855 / 37), this protein is UPF0060 membrane protein Ping_0587.